Reading from the N-terminus, the 335-residue chain is 2-acylglycerol O-acyltransferase 2-B (335 aa).

The next 2 helical transmembrane spans lie at 24 to 44 (WAVSFLAMAQCCIALYILLLF) and 104 to 124 (YIMGFHPHGVLVVGAFGNFCT). An N-linked (GlcNAc...) asparagine glycan is attached at Asn206.

It belongs to the diacylglycerol acyltransferase family.

The protein localises to the endoplasmic reticulum membrane. It is found in the cytoplasm. The protein resides in the perinuclear region. It carries out the reaction a 2-acylglycerol + an acyl-CoA = a 1,2-diacylglycerol + CoA. The enzyme catalyses a 2-acylglycerol + an acyl-CoA = a 1,2-diacyl-sn-glycerol + CoA. The catalysed reaction is a 2-acylglycerol + an acyl-CoA = a 2,3-diacyl-sn-glycerol + CoA. It catalyses the reaction a 1-acylglycerol + an acyl-CoA = a 1,2-diacylglycerol + CoA. It carries out the reaction a 1-acylglycerol + an acyl-CoA = a 1,3-diacylglycerol + CoA. The enzyme catalyses 1-O-alkylglycerol + an acyl-CoA = 1-O-alkyl-3-acylglycerol + CoA. The catalysed reaction is an acyl-CoA + a 1,2-diacyl-sn-glycerol = a triacyl-sn-glycerol + CoA. It functions in the pathway glycerolipid metabolism; triacylglycerol biosynthesis. In terms of biological role, catalyzes the formation of diacylglycerol from 2-monoacylglycerol and fatty acyl-CoA. Functionally, involved in glycerolipid synthesis and lipid metabolism. Catalyzes the formation of diacylglycerol, the precursor of triacylglycerol, by transferring the acyl chain of a fatty acyl-CoA to a monoacylglycerol. Plays a central role in absorption of dietary fat in the small intestine by catalyzing the resynthesis of triacylglycerol in enterocytes. Has a preference toward monoacylglycerols containing unsaturated fatty acids in an order of C18:3 &gt; C18:2 &gt; C18:1 &gt; C18:0 at sn-2. Able to use 1-monoalkylglycerol (1-MAkG, 1-O-alkylglycerol) as an acyl acceptor for the synthesis of monoalkyl-monoacylglycerol (MAMAG, 1-O-alkyl-3-acylglycerol or 1-O-alkyl-2-acylglycerol) and subsequently, with lower efficiency, may add another acyl chain producing monoalkyl-diacylglycerol (MADAG, 1-O-alkyl-2,3-diacylglycerol). Possesses weak but significant activity with diacylglycerol as substrate, producing triacylglycerol (triacyl-sn-glycerol). The polypeptide is 2-acylglycerol O-acyltransferase 2-B (mogat2-b) (Xenopus laevis (African clawed frog)).